Consider the following 561-residue polypeptide: Glutamate--tRNA ligase (561 aa).

The 'HIGH' region motif lies at 107-117; sequence PNPSGPLHLGH.

Belongs to the class-I aminoacyl-tRNA synthetase family. Glutamate--tRNA ligase type 2 subfamily.

Its subcellular location is the cytoplasm. The catalysed reaction is tRNA(Glu) + L-glutamate + ATP = L-glutamyl-tRNA(Glu) + AMP + diphosphate. Catalyzes the attachment of glutamate to tRNA(Glu) in a two-step reaction: glutamate is first activated by ATP to form Glu-AMP and then transferred to the acceptor end of tRNA(Glu). The sequence is that of Glutamate--tRNA ligase from Methanospirillum hungatei JF-1 (strain ATCC 27890 / DSM 864 / NBRC 100397 / JF-1).